Consider the following 175-residue polypeptide: Adenine phosphoribosyltransferase (175 aa).

Belongs to the purine/pyrimidine phosphoribosyltransferase family. Homodimer.

The protein localises to the cytoplasm. It carries out the reaction AMP + diphosphate = 5-phospho-alpha-D-ribose 1-diphosphate + adenine. It participates in purine metabolism; AMP biosynthesis via salvage pathway; AMP from adenine: step 1/1. In terms of biological role, catalyzes a salvage reaction resulting in the formation of AMP, that is energically less costly than de novo synthesis. The protein is Adenine phosphoribosyltransferase of Pelagibacter ubique (strain HTCC1062).